The chain runs to 146 residues: Large ribosomal subunit protein bL19 (146 aa).

It belongs to the bacterial ribosomal protein bL19 family.

This protein is located at the 30S-50S ribosomal subunit interface and may play a role in the structure and function of the aminoacyl-tRNA binding site. The polypeptide is Large ribosomal subunit protein bL19 (Bartonella henselae (strain ATCC 49882 / DSM 28221 / CCUG 30454 / Houston 1) (Rochalimaea henselae)).